The primary structure comprises 328 residues: MSEKIYEYKDENNWFIGKMTGHNLISGWGVKHTTIKKIDDLLDGIAATLDWENPKGYDVSVVRYQSPLSLITFIIDMINQETQREIKVIPHAGTILLMENAKLLAVYLPEGGVSTATFFATSEQGFGDTILIATRNEGKTKEFRNLFGQLGYRVENLNDYPELPEVAETGTTFEENARLKAETISHLTGKMVLADDSGLKVDALGGLPGVWSARFSGPDATDAKNNAKLLHELAMVFEQKKRSAQFHTTLVVAAPNKDSLVVEAEWPGYIATQPKGENGFGYDPVFIVGETGRHAAELEADQKNQLSHRGQAVRKLMEVFPAWQAKQS.

A unknown region spans residues 1–129; that stretch reads MSEKIYEYKD…ATSEQGFGDT (129 aa). Residues 130 to 324 are NTP pyrophosphatase; the sequence is ILIATRNEGK…KLMEVFPAWQ (195 aa). 134 to 139 provides a ligand contact to substrate; sequence TRNEGK. Residue D196 is the Proton acceptor of the active site. D196 contributes to the Mg(2+) binding site. Residues S197, 280–283, K303, and 308–309 each bind substrate; these read FGYD and HR.

The protein belongs to the HAM1 NTPase family. In terms of assembly, homodimer. It depends on Mg(2+) as a cofactor.

The catalysed reaction is XTP + H2O = XMP + diphosphate + H(+). The enzyme catalyses dITP + H2O = dIMP + diphosphate + H(+). It catalyses the reaction ITP + H2O = IMP + diphosphate + H(+). In terms of biological role, pyrophosphatase that catalyzes the hydrolysis of nucleoside triphosphates to their monophosphate derivatives, with a high preference for the non-canonical purine nucleotides XTP (xanthosine triphosphate), dITP (deoxyinosine triphosphate) and ITP. Seems to function as a house-cleaning enzyme that removes non-canonical purine nucleotides from the nucleotide pool, thus preventing their incorporation into DNA/RNA and avoiding chromosomal lesions. This Streptococcus pyogenes serotype M18 (strain MGAS8232) protein is dITP/XTP pyrophosphatase.